The sequence spans 387 residues: Gamma-butyrobetaine dioxygenase (387 aa).

Cys-38, Cys-40, Cys-43, and His-82 together coordinate Zn(2+). Residues His-202, Asp-204, and His-347 each contribute to the Fe cation site. Ser-351 carries the post-translational modification Phosphoserine.

Belongs to the gamma-BBH/TMLD family. The cofactor is Fe(2+). L-ascorbate serves as cofactor. In terms of tissue distribution, expressed in the liver and in some extend in the testis and the epididymis.

The protein resides in the cytoplasm. The catalysed reaction is 4-(trimethylamino)butanoate + 2-oxoglutarate + O2 = carnitine + succinate + CO2. The protein operates within amine and polyamine biosynthesis; carnitine biosynthesis. In terms of biological role, catalyzes the formation of L-carnitine from gamma-butyrobetaine. This chain is Gamma-butyrobetaine dioxygenase (Bbox1), found in Rattus norvegicus (Rat).